The sequence spans 153 residues: Protein DpnD (153 aa).

This chain is Protein DpnD, found in Streptococcus pneumoniae serotype 4 (strain ATCC BAA-334 / TIGR4).